The primary structure comprises 66 residues: Neurotoxin-like protein STR1 (66 aa).

An LCN-type CS-alpha/beta domain is found at 2 to 65 (RDGYIVHDGT…VWGEDGFMCW (64 aa)). Cystine bridges form between C13–C64, C17–C40, C26–C45, and C30–C47.

The protein belongs to the long (4 C-C) scorpion toxin superfamily. Sodium channel inhibitor family. Beta subfamily. In terms of tissue distribution, expressed by the venom gland.

The protein resides in the secreted. Its function is as follows. This protein is not toxic. This is Neurotoxin-like protein STR1 from Androctonus australis (Sahara scorpion).